The primary structure comprises 350 residues: tRNA uridine(34) hydroxylase (350 aa).

A Rhodanese domain is found at 146–240 (DDPDAVFIDM…YARRAREQGL (95 aa)). The active-site Cysteine persulfide intermediate is the Cys200. The span at 319 to 328 (RRRRAGRENG) shows a compositional bias: basic and acidic residues. Residues 319–350 (RRRRAGRENGNKIFNKSRGRLNSKLSIPDPAE) are disordered.

This sequence belongs to the TrhO family.

It carries out the reaction uridine(34) in tRNA + AH2 + O2 = 5-hydroxyuridine(34) in tRNA + A + H2O. Its function is as follows. Catalyzes oxygen-dependent 5-hydroxyuridine (ho5U) modification at position 34 in tRNAs. The protein is tRNA uridine(34) hydroxylase of Salmonella dublin (strain CT_02021853).